The following is a 225-amino-acid chain: UPF0173 metal-dependent hydrolase Pcal_1074 (225 aa).

The protein belongs to the UPF0173 family.

In Pyrobaculum calidifontis (strain DSM 21063 / JCM 11548 / VA1), this protein is UPF0173 metal-dependent hydrolase Pcal_1074.